Here is a 448-residue protein sequence, read N- to C-terminus: Chromosomal replication initiator protein DnaA (448 aa).

Residues 1–73 (MNTHLTETWE…VNALKLLTSK (73 aa)) form a domain I, interacts with DnaA modulators region. Residues 73–109 (KKYNIDFIVTTEEKIEENQKNHNNEKSNIVVNDEMST) are domain II. The tract at residues 110-326 (MLNPKYTFDS…GALIRIVAFS (217 aa)) is domain III, AAA+ region. Positions 154, 156, 157, and 158 each coordinate ATP. The segment at 327–448 (SLTNKEISID…KELNKRINQK (122 aa)) is domain IV, binds dsDNA.

The protein belongs to the DnaA family. As to quaternary structure, oligomerizes as a right-handed, spiral filament on DNA at oriC.

The protein resides in the cytoplasm. Functionally, plays an essential role in the initiation and regulation of chromosomal replication. ATP-DnaA binds to the origin of replication (oriC) to initiate formation of the DNA replication initiation complex once per cell cycle. Binds the DnaA box (a 9 base pair repeat at the origin) and separates the double-stranded (ds)DNA. Forms a right-handed helical filament on oriC DNA; dsDNA binds to the exterior of the filament while single-stranded (ss)DNA is stabiized in the filament's interior. The ATP-DnaA-oriC complex binds and stabilizes one strand of the AT-rich DNA unwinding element (DUE), permitting loading of DNA polymerase. After initiation quickly degrades to an ADP-DnaA complex that is not apt for DNA replication. Binds acidic phospholipids. This Clostridium botulinum (strain ATCC 19397 / Type A) protein is Chromosomal replication initiator protein DnaA.